The following is a 237-amino-acid chain: uncharacterized protein (237 aa).

21–28 (GCDGSGKS) serves as a coordination point for ATP.

It to E.coli YghR and YghT.

This is an uncharacterized protein from Escherichia coli (strain K12).